We begin with the raw amino-acid sequence, 446 residues long: Tripartite motif-containing protein 43C (446 aa).

The RING-type zinc finger occupies C16 to R57. Residues S88–I129 form a B box-type zinc finger. Zn(2+)-binding residues include C93, H96, C115, and H121. A B30.2/SPRY domain is found at R271 to T446.

The protein belongs to the TRIM/RBCC family.

This is Tripartite motif-containing protein 43C from Mus musculus (Mouse).